The following is a 294-amino-acid chain: NADH-cytochrome b5 reductase 1 (294 aa).

Residues 13-33 traverse the membrane as a helical segment; the sequence is PHASFLGGLVVAAILGLFIFF. An FAD-binding FR-type domain is found at 44 to 147; the sequence is VEWRSFKLVD…KGPKGKFVYT (104 aa). Residues 127 to 142 and 153 to 185 contribute to the FAD site; these read SLLT…GPKG and HLVM…RLSL.

It belongs to the flavoprotein pyridine nucleotide cytochrome reductase family. As to quaternary structure, monomer. Component of the 2-(3-amino-3-carboxypropyl)histidine synthase complex composed of DPH1, DPH2, DPH3 and a NADH-dependent reductase, predominantly CBR1. FAD serves as cofactor.

The protein localises to the mitochondrion outer membrane. The enzyme catalyses 2 Fe(III)-[cytochrome b5] + NADH = 2 Fe(II)-[cytochrome b5] + NAD(+) + H(+). It carries out the reaction 2 Fe(3+)-[Dph3] + NADH = 2 Fe(2+)-[Dph3] + NAD(+) + H(+). It functions in the pathway protein modification; peptidyl-diphthamide biosynthesis. In terms of biological role, NADH-dependent reductase for DPH3 and cytochrome b5. Required for the first step of diphthamide biosynthesis, a post-translational modification of histidine which occurs in elongation factor 2. DPH1 and DPH2 transfer a 3-amino-3-carboxypropyl (ACP) group from S-adenosyl-L-methionine (SAM) to a histidine residue, the reaction is assisted by a reduction system comprising DPH3 and a NADH-dependent reductase, predominantly CBR1. By reducing DPH3, also involved in the formation of the tRNA wobble base modification mcm5s 2U (5-methoxycarbonylmethyl-2-thiouridine), mediated by the elongator complex. The cytochrome b5/NADH cytochrome b5 reductase electron transfer system supports the catalytic activity of several sterol biosynthetic enzymes. The chain is NADH-cytochrome b5 reductase 1 (CBR1) from Cryptococcus neoformans var. neoformans serotype D (strain B-3501A) (Filobasidiella neoformans).